The primary structure comprises 369 residues: MTTKLIPAQQYHDIFIAGQPLIDLRAPIEFDRGAFPSSVNLPLMVDKEREKVGTCYKEQGQQAAIALGHSLVHGVVKQQRIDAWLNFLSAHPQAYLYCFRGGLRSQLTQQWLQEAGVTVPYVQGGYKGMRQYLIGVIEAAPSLQPLLSLSGMTGSGKTDFLKRRKEAIDLEGIANHRGSSFGKNIDPQPTQINFENRLAIALLHHQLGNHACLLLEDESFLIGRSALPQSFYSAMQTADIVVLEEDDDIRLTRLLDEYVHKMHRGFIERLGLEAGFEAFSHYLLQSLGSIRKRLGGKQYQELQDIMQQALSQQLNQNQTSQHLAWISLLLHKYYDPMYEYQLQKKAGNILFRGSHQATHEWLDNYQSER.

The 124-residue stretch at 15–138 folds into the Rhodanese domain; that stretch reads FIAGQPLIDL…MRQYLIGVIE (124 aa). Cysteine 98 functions as the S-selanylcysteine intermediate in the catalytic mechanism.

Belongs to the SelU family. As to quaternary structure, monomer.

The enzyme catalyses 5-methylaminomethyl-2-thiouridine(34) in tRNA + selenophosphate + (2E)-geranyl diphosphate + H2O + H(+) = 5-methylaminomethyl-2-selenouridine(34) in tRNA + (2E)-thiogeraniol + phosphate + diphosphate. It catalyses the reaction 5-methylaminomethyl-2-thiouridine(34) in tRNA + (2E)-geranyl diphosphate = 5-methylaminomethyl-S-(2E)-geranyl-thiouridine(34) in tRNA + diphosphate. It carries out the reaction 5-methylaminomethyl-S-(2E)-geranyl-thiouridine(34) in tRNA + selenophosphate + H(+) = 5-methylaminomethyl-2-(Se-phospho)selenouridine(34) in tRNA + (2E)-thiogeraniol. The catalysed reaction is 5-methylaminomethyl-2-(Se-phospho)selenouridine(34) in tRNA + H2O = 5-methylaminomethyl-2-selenouridine(34) in tRNA + phosphate. In terms of biological role, involved in the post-transcriptional modification of the uridine at the wobble position (U34) of tRNA(Lys), tRNA(Glu) and tRNA(Gln). Catalyzes the conversion of 2-thiouridine (S2U-RNA) to 2-selenouridine (Se2U-RNA). Acts in a two-step process involving geranylation of 2-thiouridine (S2U) to S-geranyl-2-thiouridine (geS2U) and subsequent selenation of the latter derivative to 2-selenouridine (Se2U) in the tRNA chain. The sequence is that of tRNA 2-selenouridine synthase from Shewanella sp. (strain MR-7).